The sequence spans 890 residues: MSRSATLLLCLLGCHVWKAVTKTLREPGAGAQEVTLKVHISDASTHQPVADALIEIFTNQASIASGTSGTDGVAFIKFQYKLGSQLIVTASKHAYVPNSAPWKPIRLPVFSSLSLGLLPERSATLMVYEDVVQIVSGFQGARPQPRVHFQRRALRLPENTSYSDLTAFLTAASSPSEVDSFPYLRGLDGNGTGNSTRHDLTPVTAVSVHLLSSNGTPVLVDGPIYVTVPLATQSSLRHNAYVAAWRFDQKLGTWLKSGLGLVHQEGSQLTWTYIAPQLGYWVAAMSPPIPGPVVTQDITTYHTVFLLAILGGMAFILLVLLCLLLYYCRRKCLKPRQHHRKLQLPAGLESSKRDQSTSMSHINLLFSRRASEFPGPLSVTSHGRPEAPGTKELMSGVHLEMMSPGGEGDLHTPMLKLSYSTSQEFSSREELLSCKEEDKSQISFDNLTPSGTLGKDYHKSVEVFPLKARKSMEREGYESSGNDDYRGSYNTVLSQPLFEKQDREGPASTGSKLTIQEHLYPAPSSPEKEQLLDRRPTECMMSRSVDHLERPTSFPRPGQLICCSSVDQVNDSVYRKVLPALVIPAHYMKLPGDHSYVSQPLVVPADQQLEIERLQAELSNPHAGIFPHPSSQIQPQPLSSQAISQQHLQDAGTREWSPQNASMSESLSIPASLNDAALAQMNSEVQLLTEKALMELGGGKPLPHPRAWFVSLDGRSNAHVRHSYIDLQRAGRNGSNDASLDSGVDMNEPKSARKGRGDALSLQQNYPPVQEHQQKEPRAPDSTAYTQLVYLDDVEQSGSECGTTVCTPEDSALRCLLEGSSRRSGGQLPSLQEETTRRTADAPSEPAASPHQRRSAHEEEEDDDDDDQGEDKKSPWQKREERPLMAFNIK.

The N-terminal stretch at 1–21 is a signal peptide; the sequence is MSRSATLLLCLLGCHVWKAVT. The Extracellular portion of the chain corresponds to 22–303; that stretch reads KTLREPGAGA…VTQDITTYHT (282 aa). Residues Asn-159, Asn-190, and Asn-194 are each glycosylated (N-linked (GlcNAc...) asparagine). A helical transmembrane segment spans residues 304-324; the sequence is VFLLAILGGMAFILLVLLCLL. Topologically, residues 325-890 are cytoplasmic; that stretch reads LYYCRRKCLK…ERPLMAFNIK (566 aa). Phosphoserine occurs at positions 358, 360, 371, 422, 443, and 525. 2 disordered regions span residues 730 to 759 and 818 to 890; these read AGRNGSNDASLDSGVDMNEPKSARKGRGDA and EGSS…FNIK. A compositionally biased stretch (basic and acidic residues) spans 747 to 757; that stretch reads NEPKSARKGRG. Residues 822–833 show a composition bias toward polar residues; the sequence is RRSGGQLPSLQE. 2 positions are modified to phosphoserine: Ser-849 and Ser-855. Residues 858–869 show a composition bias toward acidic residues; the sequence is EEEEDDDDDDQG. The span at 870–883 shows a compositional bias: basic and acidic residues; the sequence is EDKKSPWQKREERP.

This sequence belongs to the FAM171 family. In terms of assembly, interacts with ADAM10, NSG1 and OAZ1. Expressed in heart, brain, liver, skeletal muscle, kidney and pancreas. In brain, expressed by glia, pyramidal neurons and astrocytes (at protein level). Highly expressed in placental trophoblasts.

Its subcellular location is the cell membrane. In terms of biological role, involved in the regulation of the cytoskeletal dynamics, plays a role in actin stress fiber formation. In Homo sapiens (Human), this protein is Protein FAM171A1.